The following is a 210-amino-acid chain: HTH-type transcriptional repressor FabR (210 aa).

The HTH tetR-type domain occupies 10-70 (KTRRSLVEAA…TMVDESGLML (61 aa)). Positions 33 to 52 (SLREVAREAGIAPTSFYRHF) form a DNA-binding region, H-T-H motif.

As to quaternary structure, homodimer.

Its subcellular location is the cytoplasm. In terms of biological role, represses the transcription of fabB, involved in unsaturated fatty acid (UFA) biosynthesis. By controlling UFA production, FabR directly influences the physical properties of the membrane bilayer. The protein is HTH-type transcriptional repressor FabR of Salmonella choleraesuis (strain SC-B67).